A 176-amino-acid chain; its full sequence is Large ribosomal subunit protein bL12m (176 aa).

The protein belongs to the bacterial ribosomal protein bL12 family. In terms of assembly, component of the mitochondrial large ribosomal subunit (mt-LSU). Mature N.crassa 74S mitochondrial ribosomes consist of a small (37S) and a large (54S) subunit. The 37S small subunit contains a 16S ribosomal RNA (16S mt-rRNA) and 32 different proteins. The 54S large subunit contains a 23S rRNA (23S mt-rRNA) and 42 different proteins.

Its subcellular location is the mitochondrion. Component of the mitochondrial ribosome (mitoribosome), a dedicated translation machinery responsible for the synthesis of mitochondrial genome-encoded proteins, including at least some of the essential transmembrane subunits of the mitochondrial respiratory chain. The mitoribosomes are attached to the mitochondrial inner membrane and translation products are cotranslationally integrated into the membrane. This is Large ribosomal subunit protein bL12m (mrpl12) from Neurospora crassa (strain ATCC 24698 / 74-OR23-1A / CBS 708.71 / DSM 1257 / FGSC 987).